The chain runs to 563 residues: Endoglucanase B (563 aa).

The or 31 signal peptide spans 1-27 (MKKFLVLLIALIMIATLLVVPGVQTSA). The active-site Proton donor is the Glu204. Glu363 (nucleophile) is an active-site residue. Residues 476 to 495 (SVTPSPSATPSPTTITAPPT) are disordered. A Dockerin domain is found at 496–562 (DTVTYGDVNG…VLRSISELPY (67 aa)).

This sequence belongs to the glycosyl hydrolase 5 (cellulase A) family.

It carries out the reaction Endohydrolysis of (1-&gt;4)-beta-D-glucosidic linkages in cellulose, lichenin and cereal beta-D-glucans.. Functionally, this enzyme catalyzes the endohydrolysis of 1,4-beta-glucosidic linkages in cellulose, lichenin and cereal beta-D-glucans. The chain is Endoglucanase B (celB) from Acetivibrio thermocellus (strain ATCC 27405 / DSM 1237 / JCM 9322 / NBRC 103400 / NCIMB 10682 / NRRL B-4536 / VPI 7372) (Clostridium thermocellum).